The sequence spans 793 residues: Pentatricopeptide repeat-containing protein At1g03100, mitochondrial (793 aa).

Residues 1-87 constitute a mitochondrion transit peptide; sequence MFSLRKTKLQ…REAISSISGS (87 aa). PPR repeat units lie at residues 257 to 291, 292 to 322, 330 to 364, 458 to 492, 495 to 529, 530 to 564, 565 to 599, 601 to 631, 637 to 671, 672 to 707, and 713 to 747; these read NTQV…GVKA, DANL…IDEA, FWQF…GKVA, TEEI…DSPV, DNSM…GVRT, GSSV…GIQL, DSSC…KILR, GNQK…IREV, GVHD…GHSP, NAQT…AAAT, and DQEL…NMFV.

This sequence belongs to the PPR family. P subfamily.

It localises to the mitochondrion. The chain is Pentatricopeptide repeat-containing protein At1g03100, mitochondrial from Arabidopsis thaliana (Mouse-ear cress).